The chain runs to 367 residues: Cobalt-precorrin-5B C(1)-methyltransferase (367 aa).

This sequence belongs to the CbiD family.

The catalysed reaction is Co-precorrin-5B + S-adenosyl-L-methionine = Co-precorrin-6A + S-adenosyl-L-homocysteine. It participates in cofactor biosynthesis; adenosylcobalamin biosynthesis; cob(II)yrinate a,c-diamide from sirohydrochlorin (anaerobic route): step 6/10. Catalyzes the methylation of C-1 in cobalt-precorrin-5B to form cobalt-precorrin-6A. The sequence is that of Cobalt-precorrin-5B C(1)-methyltransferase from Thermosynechococcus vestitus (strain NIES-2133 / IAM M-273 / BP-1).